The primary structure comprises 1012 residues: Structural polyprotein (1012 aa).

Aspartate 30 is a binding site for a divalent metal cation. Positions 513 to 755 (ADKGYEVVAN…AGRQYHLAMA (243 aa)) constitute a Peptidase S50 domain. Serine 652 acts as the Nucleophile in catalysis. The active site involves lysine 692. The interval 969 to 1012 (AMEMKHRNPRRALPKPKPKPNAPTQRPPGRLGRWIRTVSDEDLE) is disordered. Over residues 975 to 986 (RNPRRALPKPKP) the composition is skewed to basic residues. The tract at residues 1003–1012 (IRTVSDEDLE) is interaction with VP1 protein.

In terms of assembly, homotrimer. A central divalent metal stabilizes the VP2 trimer. Interacts with host ITGA4/ITGB1. As to quaternary structure, homodimer. Interacts (via C-terminus) with VP1 in the cytoplasm. Interacts with VP2. Post-translationally, specific enzymatic cleavages yield mature proteins. The capsid assembly seems to be regulated by polyprotein processing. The protease VP4 cleaves itself off the polyprotein, thus releasing pre-VP2 and VP3 within the infected cell. During capsid assembly, the C-terminus of pre-VP2 is further processed by VP4, giving rise to VP2, the external capsid protein and three small peptides that all stay closely associated with the capsid.

The protein localises to the virion. Its subcellular location is the host cytoplasm. Functionally, capsid protein VP2 self assembles to form an icosahedral capsid with a T=13 symmetry, about 70 nm in diameter, and consisting of 260 VP2 trimers. The capsid encapsulates the genomic dsRNA. VP2 is also involved in attachment and entry into the host cell by interacting with host ITGA4/ITGB1. The precursor of VP2 plays an important role in capsid assembly. First, pre-VP2 and VP2 oligomers assemble to form a procapsid. Then, the pre-VP2 intermediates may be processed into VP2 proteins by proteolytic cleavage mediated by VP4 to obtain the mature virion. The final capsid is composed of pentamers and hexamers but VP2 has a natural tendency to assemble into all-pentameric structures. Therefore pre-VP2 may be required to allow formation of the hexameric structures. In terms of biological role, protease VP4 is a serine protease that cleaves the polyprotein into its final products. Pre-VP2 is first partially cleaved, and may be completely processed by VP4 upon capsid maturation. Its function is as follows. Capsid protein VP3 plays a key role in virion assembly by providing a scaffold for the capsid made of VP2. May self-assemble to form a T=4-like icosahedral inner-capsid composed of at least 180 trimers. Plays a role in genomic RNA packaging by recruiting VP1 into the capsid and interacting with the dsRNA genome segments to form a ribonucleoprotein complex. Additionally, the interaction of the VP3 C-terminal tail with VP1 removes the inherent structural blockade of the polymerase active site. Thus, VP3 can also function as a transcriptional activator. Functionally, structural peptide 1 is a small peptide derived from pre-VP2 C-terminus. It destabilizes and perforates cell membranes, suggesting a role during entry. Structural peptide 2 is a small peptide derived from pVP2 C-terminus. It is not essential for the virus viability, but viral growth is affected when missing. In terms of biological role, structural peptide 3 is a small peptide derived from pVP2 C-terminus. It is not essential for the virus viability, but viral growth is affected when missing. Its function is as follows. Structural peptide 4 is a small peptide derived from pVP2 C-terminus. It is essential for the virus viability. In Avian infectious bursal disease virus (strain Cu-1) (IBDV), this protein is Structural polyprotein.